The sequence spans 608 residues: Probable adenylate kinase 5, chloroplastic (608 aa).

Low complexity predominate over residues 1 to 20; that stretch reads MAASSSSSSPAAASAPFAAP. The disordered stretch occupies residues 1 to 44; sequence MAASSSSSSPAAASAPFAAPGPHRRPGLALRPSPPTPPSSSLSC. The N-terminal 75 residues, 1–75, are a transit peptide targeting the chloroplast; sequence MAASSSSSSP…GPRGMGLRCR (75 aa). 99–104 is a binding site for ATP; that stretch reads ASGKGT. Positions 119–148 are NMP; it reads STGDLLRAEVSSGTEIGKKAKEYMDNGMLV. Residues Thr120, Arg125, 146–148, 175–178, and Gln182 each bind AMP; these read MLV and GYPR. Residues Arg209, Arg213, and 222-223 contribute to the ATP site; that span reads IY. The LID stretch occupies residues 212–245; that stretch reads GRRLDPETGKIYHIKNFPPENDEVSARLVTRSDD. Positions 242 and 253 each coordinate AMP.

The protein belongs to the adenylate kinase family.

It is found in the plastid. The protein resides in the chloroplast. It catalyses the reaction AMP + ATP = 2 ADP. In terms of biological role, catalyzes the reversible transfer of the terminal phosphate group between ATP and AMP. Plays an important role in cellular energy homeostasis and in adenine nucleotide metabolism. This chain is Probable adenylate kinase 5, chloroplastic, found in Oryza sativa subsp. japonica (Rice).